A 544-amino-acid polypeptide reads, in one-letter code: CTP synthase (544 aa).

Residues 1-267 (MSKFIFVTGG…GDLLVSRLHL (267 aa)) are amidoligase domain. Position 13 (Ser-13) interacts with CTP. Ser-13 lines the UTP pocket. An ATP-binding site is contributed by 14–19 (SVGKGI). An L-glutamine-binding site is contributed by Tyr-54. Residue Asp-71 coordinates ATP. Asp-71 and Glu-141 together coordinate Mg(2+). Residues 148-150 (DIE), 188-193 (KTKPTQ), and Lys-224 each bind CTP. UTP-binding positions include 188–193 (KTKPTQ) and Lys-224. Residues 299–534 (YVELKDAYYS…INAAKKVIRD (236 aa)) enclose the Glutamine amidotransferase type-1 domain. Gly-354 lines the L-glutamine pocket. Catalysis depends on Cys-381, which acts as the Nucleophile; for glutamine hydrolysis. Residues 382-385 (LGMQ), Glu-405, and Arg-462 each bind L-glutamine. Residues His-507 and Glu-509 contribute to the active site.

This sequence belongs to the CTP synthase family. Homotetramer.

The catalysed reaction is UTP + L-glutamine + ATP + H2O = CTP + L-glutamate + ADP + phosphate + 2 H(+). It carries out the reaction L-glutamine + H2O = L-glutamate + NH4(+). The enzyme catalyses UTP + NH4(+) + ATP = CTP + ADP + phosphate + 2 H(+). It participates in pyrimidine metabolism; CTP biosynthesis via de novo pathway; CTP from UDP: step 2/2. Allosterically activated by GTP, when glutamine is the substrate; GTP has no effect on the reaction when ammonia is the substrate. The allosteric effector GTP functions by stabilizing the protein conformation that binds the tetrahedral intermediate(s) formed during glutamine hydrolysis. Inhibited by the product CTP, via allosteric rather than competitive inhibition. Its function is as follows. Catalyzes the ATP-dependent amination of UTP to CTP with either L-glutamine or ammonia as the source of nitrogen. Regulates intracellular CTP levels through interactions with the four ribonucleotide triphosphates. In Dehalococcoides mccartyi (strain ATCC BAA-2100 / JCM 16839 / KCTC 5957 / BAV1), this protein is CTP synthase.